The chain runs to 622 residues: Chaperone protein HscA homolog (622 aa).

This sequence belongs to the heat shock protein 70 family.

In terms of biological role, chaperone involved in the maturation of iron-sulfur cluster-containing proteins. Has a low intrinsic ATPase activity which is markedly stimulated by HscB. This is Chaperone protein HscA homolog from Burkholderia cenocepacia (strain ATCC BAA-245 / DSM 16553 / LMG 16656 / NCTC 13227 / J2315 / CF5610) (Burkholderia cepacia (strain J2315)).